A 102-amino-acid polypeptide reads, in one-letter code: Small ribosomal subunit protein uS10 (102 aa).

This sequence belongs to the universal ribosomal protein uS10 family. In terms of assembly, part of the 30S ribosomal subunit.

In terms of biological role, involved in the binding of tRNA to the ribosomes. The polypeptide is Small ribosomal subunit protein uS10 (Cenarchaeum symbiosum (strain A)).